We begin with the raw amino-acid sequence, 386 residues long: MVTPKQIDFSSCGGGDNSDDTLSHRESPRNPSSKRAAASFAAEAGEETMKKKKKKKKKNLGPPLIVRIWNEEDELSILKGLVDYRAKTGFNPKIDWDAFYSFLGSSIVAKFSKEQVLSKIRKLKRRFHVHWEKISEGNDPKFTRSSDSEAFGFSSMIWGQGEFGNDDGMDKEMVKEHDVNGNGAAENGTARIAQENESGEEMLKEHEETLNENGAEEIRDNDETARKAQQLESESEEEMLKEHEEPFNENGAENIRDNNGTTQIAQQSESESEEMLKEHEEVANTELVNENGAAKTTENGTTGGKERHDDDDDDELCAVQDAFEAVMSQGLSGYQKKLQLEKLMNLGTGKRRELSDEWKALCVEERRLNIKKLRFSAKLAEAANDS.

Disordered stretches follow at residues 1–58 (MVTP…KKKK) and 197–314 (ESGE…DDDD). Basic and acidic residues predominate over residues 216 to 226 (EEIRDNDETAR). Residues 221-285 (NDETARKAQQ…LKEHEEVANT (65 aa)) adopt a coiled-coil conformation. Residues 257–267 (DNNGTTQIAQQ) show a composition bias toward polar residues. A compositionally biased stretch (low complexity) spans 291-300 (NGAAKTTENG). The non-canonical leucine-zipper stretch occupies residues 354–375 (LSDEWKALCVEERRLNIKKLRF).

Belongs to the GeBP family. As to quaternary structure, homo- and heterodimers. Interacts with GEBP, GPL2 and GPL3. Interacts with GEBP. Expressed in the apical meristem and young leaf primordia. Detected in the vascular tissues of cotyledons and leaves, in hydathodes and at the base of flowers and siliques, but not in roots.

The protein resides in the nucleus. Probable transcription factor. May play redundant roles with GEBP and GPL2 in cytokinin responses by regulating the transcript levels of type-A ARR response genes. Involved in stress responses. Plays a repressive role in cell expansion by counteracting the positive role of CPR5 in this process, but does not regulate cell proliferation or endoreduplication. The protein is GLABROUS1 enhancer-binding protein-like 1 of Arabidopsis thaliana (Mouse-ear cress).